Consider the following 385-residue polypeptide: DNA replication and repair protein RecF (385 aa).

Gly30–Thr37 contributes to the ATP binding site.

This sequence belongs to the RecF family.

It is found in the cytoplasm. Functionally, the RecF protein is involved in DNA metabolism; it is required for DNA replication and normal SOS inducibility. RecF binds preferentially to single-stranded, linear DNA. It also seems to bind ATP. This Mycobacterium bovis (strain ATCC BAA-935 / AF2122/97) protein is DNA replication and repair protein RecF.